Consider the following 79-residue polypeptide: Small ribosomal subunit protein bS18 (79 aa).

Belongs to the bacterial ribosomal protein bS18 family. As to quaternary structure, part of the 30S ribosomal subunit. Forms a tight heterodimer with protein bS6.

Functionally, binds as a heterodimer with protein bS6 to the central domain of the 16S rRNA, where it helps stabilize the platform of the 30S subunit. The protein is Small ribosomal subunit protein bS18 of Renibacterium salmoninarum (strain ATCC 33209 / DSM 20767 / JCM 11484 / NBRC 15589 / NCIMB 2235).